Consider the following 26-residue polypeptide: Dermaseptin-J2 (26 aa).

A Valine amide modification is found at valine 26.

As to expression, expressed by the skin glands.

Its subcellular location is the secreted. Has antimicrobial activity. In Phasmahyla jandaia (Jandaia leaf frog), this protein is Dermaseptin-J2.